The primary structure comprises 195 residues: Small ribosomal subunit protein uS4c (195 aa).

Residues 82–143 form the S4 RNA-binding domain; the sequence is MRLDNILFRL…KQRSKALIQN (62 aa).

Belongs to the universal ribosomal protein uS4 family. In terms of assembly, part of the 30S ribosomal subunit. Contacts protein S5. The interaction surface between S4 and S5 is involved in control of translational fidelity.

It is found in the plastid. It localises to the chloroplast. Its function is as follows. One of the primary rRNA binding proteins, it binds directly to 16S rRNA where it nucleates assembly of the body of the 30S subunit. Functionally, with S5 and S12 plays an important role in translational accuracy. The polypeptide is Small ribosomal subunit protein uS4c (rps4) (Watsonia angusta).